Reading from the N-terminus, the 244-residue chain is Geranylgeranylglyceryl phosphate synthase (244 aa).

Mg(2+) is bound by residues aspartate 20 and serine 49. Residues 169 to 175, 200 to 201, and 222 to 223 each bind sn-glycerol 1-phosphate; these read YLEAGSG, GG, and GT.

This sequence belongs to the GGGP/HepGP synthase family. Group II subfamily. Requires Mg(2+) as cofactor.

The protein localises to the cytoplasm. The catalysed reaction is sn-glycerol 1-phosphate + (2E,6E,10E)-geranylgeranyl diphosphate = sn-3-O-(geranylgeranyl)glycerol 1-phosphate + diphosphate. It functions in the pathway membrane lipid metabolism; glycerophospholipid metabolism. Functionally, prenyltransferase that catalyzes the transfer of the geranylgeranyl moiety of geranylgeranyl diphosphate (GGPP) to the C3 hydroxyl of sn-glycerol-1-phosphate (G1P). This reaction is the first ether-bond-formation step in the biosynthesis of archaeal membrane lipids. This Korarchaeum cryptofilum (strain OPF8) protein is Geranylgeranylglyceryl phosphate synthase.